A 382-amino-acid polypeptide reads, in one-letter code: 6-hydroxynicotinate 3-monooxygenase (382 aa).

The N-terminal stretch at 1–25 (MRGRQKIAIVGAGLGGAAAATLLQQ) is a signal peptide. FAD is bound by residues G15, 34–35 (EQ), H47, R108, and L130. The Proton acceptor role is filled by H47. The active-site Proton acceptor is the Y215. Residues D294 and 307 to 308 (AC) contribute to the FAD site.

Belongs to the 6-hydroxynicotinate 3-monooxygenase family. In terms of assembly, monomer. The cofactor is FAD.

It catalyses the reaction 6-hydroxynicotinate + NADH + O2 + 2 H(+) = 2,5-dihydroxypyridine + CO2 + NAD(+) + H2O. It participates in cofactor degradation; nicotinate degradation. Its function is as follows. Flavin-dependent monooxygenase (FMO) that catalyzes the decarboxylative hydroxylation of 6-hydroxynicotinic acid (6-HNA) to 2,5-dihydroxypyridine (2,5-DHP) with concomitant oxidation of NADH, a step in the aerobic nicotinate degradation pathway. This Pseudomonas putida (strain ATCC 47054 / DSM 6125 / CFBP 8728 / NCIMB 11950 / KT2440) protein is 6-hydroxynicotinate 3-monooxygenase.